The following is a 59-amino-acid chain: Small ribosomal subunit protein eS30 (59 aa).

The segment at 1–35 (KVHGSLARAGKVRGQTPKVAKQEKKKKKTGRAKRR) is disordered. Basic residues predominate over residues 23–35 (EKKKKKTGRAKRR). K51 bears the N6-succinyllysine mark.

It belongs to the eukaryotic ribosomal protein eS30 family.

The chain is Small ribosomal subunit protein eS30 (Fau) from Mus spicilegus (Steppe mouse).